The sequence spans 382 residues: Dual-specificity RNA methyltransferase RlmN (382 aa).

The active-site Proton acceptor is E96. Positions 102–340 (QNGRGTLCVS…VTVRTTRGDD (239 aa)) constitute a Radical SAM core domain. Residues C109 and C345 are joined by a disulfide bond. Positions 116, 120, and 123 each coordinate [4Fe-4S] cluster. Residues 170-171 (GE), S202, 224-226 (SLH), and N302 each bind S-adenosyl-L-methionine. The active-site S-methylcysteine intermediate is the C345.

This sequence belongs to the radical SAM superfamily. RlmN family. [4Fe-4S] cluster serves as cofactor.

It localises to the cytoplasm. It catalyses the reaction adenosine(2503) in 23S rRNA + 2 reduced [2Fe-2S]-[ferredoxin] + 2 S-adenosyl-L-methionine = 2-methyladenosine(2503) in 23S rRNA + 5'-deoxyadenosine + L-methionine + 2 oxidized [2Fe-2S]-[ferredoxin] + S-adenosyl-L-homocysteine. It carries out the reaction adenosine(37) in tRNA + 2 reduced [2Fe-2S]-[ferredoxin] + 2 S-adenosyl-L-methionine = 2-methyladenosine(37) in tRNA + 5'-deoxyadenosine + L-methionine + 2 oxidized [2Fe-2S]-[ferredoxin] + S-adenosyl-L-homocysteine. In terms of biological role, specifically methylates position 2 of adenine 2503 in 23S rRNA and position 2 of adenine 37 in tRNAs. m2A2503 modification seems to play a crucial role in the proofreading step occurring at the peptidyl transferase center and thus would serve to optimize ribosomal fidelity. The chain is Dual-specificity RNA methyltransferase RlmN from Ectopseudomonas mendocina (strain ymp) (Pseudomonas mendocina).